We begin with the raw amino-acid sequence, 313 residues long: uncharacterized protein (313 aa).

Positions 8, 10, 126, 180, 207, and 262 each coordinate a divalent metal cation.

The protein belongs to the metallo-dependent hydrolases superfamily. TatD-type hydrolase family. A divalent metal cation serves as cofactor.

Putative deoxyribonuclease. This is an uncharacterized protein from Saccharomyces cerevisiae (strain ATCC 204508 / S288c) (Baker's yeast).